A 194-amino-acid chain; its full sequence is Thymidine kinase (194 aa).

ATP is bound by residues 15 to 22 and 88 to 91; these read GSMFSGKS and DEVQ. Residue Glu-89 is the Proton acceptor of the active site. Zn(2+)-binding residues include Cys-145, Cys-148, Cys-183, and His-186.

This sequence belongs to the thymidine kinase family. As to quaternary structure, homotetramer.

The protein localises to the cytoplasm. The enzyme catalyses thymidine + ATP = dTMP + ADP + H(+). The chain is Thymidine kinase from Bacillus velezensis (strain DSM 23117 / BGSC 10A6 / LMG 26770 / FZB42) (Bacillus amyloliquefaciens subsp. plantarum).